A 160-amino-acid polypeptide reads, in one-letter code: NADH-quinone oxidoreductase subunit B (160 aa).

[4Fe-4S] cluster contacts are provided by cysteine 39, cysteine 40, cysteine 104, and cysteine 135.

Belongs to the complex I 20 kDa subunit family. In terms of assembly, NDH-1 is composed of 14 different subunits. Subunits NuoB, C, D, E, F, and G constitute the peripheral sector of the complex. Requires [4Fe-4S] cluster as cofactor.

It is found in the cell membrane. It catalyses the reaction a quinone + NADH + 5 H(+)(in) = a quinol + NAD(+) + 4 H(+)(out). In terms of biological role, NDH-1 shuttles electrons from NADH, via FMN and iron-sulfur (Fe-S) centers, to quinones in the respiratory chain. The immediate electron acceptor for the enzyme in this species is believed to be a menaquinone. Couples the redox reaction to proton translocation (for every two electrons transferred, four hydrogen ions are translocated across the cytoplasmic membrane), and thus conserves the redox energy in a proton gradient. The chain is NADH-quinone oxidoreductase subunit B from Amoebophilus asiaticus (strain 5a2).